A 327-amino-acid chain; its full sequence is Malate dehydrogenase (327 aa).

12–18 (GAAGQIG) is an NAD(+) binding site. Positions 93 and 99 each coordinate substrate. NAD(+)-binding positions include Asn106, Gln113, and 130–132 (VGN). Residues Asn132 and Arg163 each coordinate substrate. The active-site Proton acceptor is His188.

The protein belongs to the LDH/MDH superfamily. MDH type 2 family.

The enzyme catalyses (S)-malate + NAD(+) = oxaloacetate + NADH + H(+). Its function is as follows. Catalyzes the reversible oxidation of malate to oxaloacetate. This is Malate dehydrogenase from Cupriavidus necator (strain ATCC 17699 / DSM 428 / KCTC 22496 / NCIMB 10442 / H16 / Stanier 337) (Ralstonia eutropha).